The chain runs to 464 residues: Protein FAM90A24 (464 aa).

3 disordered regions span residues 1–42, 69–389, and 415–437; these read MMAR…DPRL, VPAT…HDGA, and HSPEKPGAFLAQSPHVSEKSEAP. 2 stretches are compositionally biased toward basic and acidic residues: residues 74-89 and 97-114; these read GKKEGKENLKPWKPRG and NKDKGEKEERPRQQDPQR. The segment covering 180 to 197 has biased composition (low complexity); it reads LASLSPLRKASLSSSSSL.

Belongs to the FAM90 family.

The sequence is that of Protein FAM90A24 from Homo sapiens (Human).